A 218-amino-acid chain; its full sequence is Autophagy-related protein 101 (218 aa).

Residues 152 to 156 are important for interaction with ATG13; that stretch reads IINIV.

It belongs to the ATG101 family. Interacts with ATG13. Associates with a complex composed of ATG13, ULK1 and RB1CC1; the association with this complex requires the presence of ATG13.

Its subcellular location is the cytoplasm. It localises to the preautophagosomal structure. In terms of biological role, autophagy factor required for autophagosome formation. Stabilizes ATG13, protecting it from proteasomal degradation. In Homo sapiens (Human), this protein is Autophagy-related protein 101 (ATG101).